The following is a 535-amino-acid chain: MFILLMFVLLLQEILANSRDENLTELNSVLEEPTYSYRAINLPAEHIPYFLHNNRHIAGICKQDSRCPYKVGFYFVLHKYLKKLKSCWGYEKSCKSDYRFSYPVCDYVESGWANDIETAQQIFWKQADFGYIRERLNEMKTHCKPTVTGDSSLTCSQFLQHCRATNLYIDLRTAKRNHERFKEDFFQKGEIGGHCTLDVKAFLAEGQRKSPLQSWFAELQTFTSLNFRPLDDGKCDIVIEKPTYFMKLDAGVNMYHHFCDFVNLYITQHINNSFSTDVNIVMWDTSSYGYGDLFSETWKAFTDYDIIYLKTFDSKRVCFKEAVFSLLPRMRYGLFYNTPLISGCHGTGLFRAFSQHVLHRLNITQEGPKDGKIRVTILARSTDYRKILNQNELVNALKTVSTLEVKVVDYKYKELEFSEQLRITHNSDIFIGMHGAGLTHLLFLPDWAVVFELYNCEDERCYLDLARLRGIHYITWRKRNKVFPQDQGHHPTLGEHPKFTNYSFDVEEFMYLVLLAANHVSQHSKWPFRVKHDEF.

The first 16 residues, 1–16 (MFILLMFVLLLQEILA), serve as a signal peptide directing secretion. N22 and N271 each carry an N-linked (GlcNAc...) asparagine glycan. The short motif at 303-305 (DYD) is the Required for optimal activity element. Residues N362 and N501 are each glycosylated (N-linked (GlcNAc...) asparagine).

This sequence belongs to the glycosyltransferase 61 family.

The protein localises to the endoplasmic reticulum lumen. It carries out the reaction L-seryl-[protein] + UDP-N-acetyl-alpha-D-glucosamine = 3-O-(N-acetyl-beta-D-glucosaminyl)-L-seryl-[protein] + UDP + H(+). The enzyme catalyses L-threonyl-[protein] + UDP-N-acetyl-alpha-D-glucosamine = 3-O-(N-acetyl-beta-D-glucosaminyl)-L-threonyl-[protein] + UDP + H(+). Its function is as follows. Catalyzes the transfer of a single N-acetylglucosamine from UDP-GlcNAc to a serine or threonine residue in extracellular proteins resulting in their modification with a beta-linked N-acetylglucosamine (O-GlcNAc). Specifically glycosylates the Thr residue located between the fifth and sixth conserved cysteines of folded EGF-like domains. This chain is EGF domain-specific O-linked N-acetylglucosamine transferase (EOGT), found in Gallus gallus (Chicken).